The sequence spans 329 residues: Deoxyhypusine hydroxylase (329 aa).

4 HEAT-like PBS-type repeats span residues 65–91 (LKHE…VLED), 99–124 (RHEA…MRDD), 232–258 (FRHE…ALSN), and 265–292 (VRHE…FLND). Fe cation-binding residues include H67, E68, H100, E101, H234, E235, H267, and E268.

This sequence belongs to the deoxyhypusine hydroxylase family. It depends on Fe(2+) as a cofactor.

It is found in the cytoplasm. The protein resides in the nucleus. The enzyme catalyses [eIF5A protein]-deoxyhypusine + AH2 + O2 = [eIF5A protein]-hypusine + A + H2O. It functions in the pathway protein modification; eIF5A hypusination. Functionally, catalyzes the hydroxylation of the N(6)-(4-aminobutyl)-L-lysine intermediate to form hypusine, an essential post-translational modification only found in mature eIF-5A factor. This chain is Deoxyhypusine hydroxylase, found in Phaeosphaeria nodorum (strain SN15 / ATCC MYA-4574 / FGSC 10173) (Glume blotch fungus).